The primary structure comprises 664 residues: UvrABC system protein B (664 aa).

The region spanning Ala24–Asn182 is the Helicase ATP-binding domain. Gly37–Thr44 serves as a coordination point for ATP. Positions Tyr90–Ile113 match the Beta-hairpin motif. The Helicase C-terminal domain occupies Gln427–Thr593. A UVR domain is found at Leu624–Ala659.

This sequence belongs to the UvrB family. As to quaternary structure, forms a heterotetramer with UvrA during the search for lesions. Interacts with UvrC in an incision complex.

Its subcellular location is the cytoplasm. In terms of biological role, the UvrABC repair system catalyzes the recognition and processing of DNA lesions. A damage recognition complex composed of 2 UvrA and 2 UvrB subunits scans DNA for abnormalities. Upon binding of the UvrA(2)B(2) complex to a putative damaged site, the DNA wraps around one UvrB monomer. DNA wrap is dependent on ATP binding by UvrB and probably causes local melting of the DNA helix, facilitating insertion of UvrB beta-hairpin between the DNA strands. Then UvrB probes one DNA strand for the presence of a lesion. If a lesion is found the UvrA subunits dissociate and the UvrB-DNA preincision complex is formed. This complex is subsequently bound by UvrC and the second UvrB is released. If no lesion is found, the DNA wraps around the other UvrB subunit that will check the other stand for damage. The sequence is that of UvrABC system protein B from Chloroflexus aggregans (strain MD-66 / DSM 9485).